A 415-amino-acid polypeptide reads, in one-letter code: Cysteate synthase (415 aa).

K104 is modified (N6-(pyridoxal phosphate)lysine). Positions 131 and 376 each coordinate pyridoxal 5'-phosphate.

Belongs to the threonine synthase family. Cysteate synthase subfamily. In terms of assembly, homotrimer. Pyridoxal 5'-phosphate is required as a cofactor.

The catalysed reaction is O-phospho-L-serine + sulfite + H(+) = L-cysteate + phosphate. Its pathway is cofactor biosynthesis; coenzyme M biosynthesis. In terms of biological role, specifically catalyzes the beta-elimination of phosphate from L-phosphoserine and the beta-addition of sulfite to the dehydroalanine intermediate to produce L-cysteate. This chain is Cysteate synthase, found in Methanothrix thermoacetophila (strain DSM 6194 / JCM 14653 / NBRC 101360 / PT) (Methanosaeta thermophila).